We begin with the raw amino-acid sequence, 173 residues long: Eggshell protein (173 aa).

Residues 1–18 form the signal peptide; that stretch reads MKQSLTLVFLVAIGYATA. The span at 145 to 162 shows a compositional bias: gly residues; that stretch reads GSGKGKGGGKGGKGGKGG. Residues 145–173 form a disordered region; sequence GSGKGKGGGKGGKGGKGGTYKPSHYGGGY.

In Schistosoma mansoni (Blood fluke), this protein is Eggshell protein.